The following is a 1008-amino-acid chain: Phytosulfokine receptor 1 (1008 aa).

The signal sequence occupies residues 1 to 25; the sequence is MRVHRFCVIVIFLTELLCFFYSSES. N-linked (GlcNAc...) asparagine glycans are attached at residues Asn55, Asn64, and Asn73. 12 LRR repeats span residues 75–98, 99–123, 124–148, 150–170, 172–194, 195–219, 221–243, 244–266, 291–315, 316–339, 341–362, and 363–387; these read TGRV…SLGK, LDEI…IFNL, KNLQ…NLPA, QSFD…ICHN, TQIR…GFGK, CVLL…LFHL, RLNL…IRNL, SSLV…VFDE, SPSL…CTAM, IALN…LPDC, RLKN…SFKN, and FESL…GILQ. Asn106 is a glycosylation site (N-linked (GlcNAc...) asparagine). 3 N-linked (GlcNAc...) asparagine glycosylation sites follow: Asn160, Asn170, and Asn187. An N-linked (GlcNAc...) asparagine glycan is attached at Asn242. Arg300 provides a ligand contact to phytosulfokine. N-linked (GlcNAc...) asparagine glycosylation is found at Asn301 and Asn311. Phytosulfokine is bound by residues Asn346, Ser370, and Ser372. Residues Asn373, Asn378, and Asn391 are each glycosylated (N-linked (GlcNAc...) asparagine). LRR repeat units lie at residues 392–414, 415–438, 439–464, and 466–486; these read LTTL…SLHF, EKLK…LSSS, NELQ…DFKA, and FYLD…LTKL. Phytosulfokine contacts are provided by Thr398, Asn424, and Asp445. N-linked (GlcNAc...) asparagine glycosylation is found at Asn472 and Asn493. Lys508 is a phytosulfokine binding site. Asn510 and Asn534 each carry an N-linked (GlcNAc...) asparagine glycan. LRR repeat units follow at residues 521–545, 546–570, 571–594, and 596–619; these read IFGF…EFGN, LKKL…LSGM, TSLE…LQQL, and FLSK…QFQT. N-linked (GlcNAc...) asparagine glycans are attached at residues Asn606 and Asn622. The helical transmembrane segment at 660 to 680 threads the bilayer; that stretch reads MAIGIAFGSVFLLTLLSLIVL. Thr731 carries the post-translational modification Phosphothreonine. The region spanning 734 to 1005 is the Protein kinase domain; that stretch reads FDQANIIGCG…PTTQQLVSWL (272 aa). ATP is bound by residues 740–748 and Lys762; that span reads IGCGGFGMV. 2 positions are modified to phosphotyrosine: Tyr807 and Tyr847. The active-site Proton acceptor is the Asp860. Tyr902 is modified (phosphotyrosine).

It belongs to the protein kinase superfamily. Ser/Thr protein kinase family. Homo- and heterodimers with PSY1R. Heterodimers with the somatic embryogenesis receptor-like kinases (SERKs). PSK is not directly involved in PSKR-SERK interaction but stabilizes PSKR island domain for recruitment of a SERK. Part of a functional complex containing PSKR1, BAK1, CNGC17, and AHA. Interacts with AHA1, AHA2, and BAK1, but not with CNGC17 or BRI1. Requires Mg(2+) as cofactor. Mn(2+) serves as cofactor. Weakly expressed in roots, leaves, stems and flowers. Expressed in the primary and lateral roots, including root primordia and root tips, but not in the hypocotyl.

Its subcellular location is the cell membrane. It carries out the reaction L-seryl-[protein] + ATP = O-phospho-L-seryl-[protein] + ADP + H(+). The catalysed reaction is L-threonyl-[protein] + ATP = O-phospho-L-threonyl-[protein] + ADP + H(+). It catalyses the reaction GTP = 3',5'-cyclic GMP + diphosphate. Its activity is regulated as follows. cGMP suppresses kinase activity. Phytosulfokine receptor with both a serine/threonine-protein kinase activity and a guanylate cyclase activity. Regulates, in response to phytosulfokine binding, a signaling cascade involved in plant cell differentiation, organogenesis, somatic embryogenesis, cellular proliferation and plant growth. Involved in plant immunity, with antagonistic effects on bacterial and fungal resistances. Not involved in PSY perception. CNGC17 and AHAs form a functional cation-translocating unit that is activated by PSKR1/BAK1 and possibly other BAK1/RLK complexes. The polypeptide is Phytosulfokine receptor 1 (Arabidopsis thaliana (Mouse-ear cress)).